The chain runs to 993 residues: UPF0182 protein MAV_4137 (993 aa).

A run of 7 helical transmembrane segments spans residues 18–38 (ILIL…RLID), 63–83 (FVVF…GLAV), 113–133 (LVSI…AQSY), 175–195 (FVAV…FGGI), 210–230 (IQLV…YWLD), 254–274 (AVLP…AAVF), and 287–307 (IGLV…PLIV). Residues 903-941 (NIQPTEGGAPAASPPANAPAPAVTPGSAPPVAAPPVPDG) form a disordered region. Positions 929–939 (SAPPVAAPPVP) are enriched in pro residues.

The protein belongs to the UPF0182 family.

It localises to the cell membrane. The polypeptide is UPF0182 protein MAV_4137 (Mycobacterium avium (strain 104)).